Here is a 223-residue protein sequence, read N- to C-terminus: Membrane protein (223 aa).

Topologically, residues 1 to 18 (MAENCTLDSEQAVLLFKE) are virion surface. Residues 19–39 (YNLFITAFLLFLTILLQYGYA) form a helical membrane-spanning segment. Over 40 to 49 (TRSRTIYILK) the chain is Intravirion. Residues 50-70 (MIVLWCFWPLNIAVGVISCIY) form a helical membrane-spanning segment. At 71-75 (PPNTG) the chain is on the virion surface side. Residues 76–96 (GLVAAIILTVFACLSFVGYWI) traverse the membrane as a helical segment. At 97–223 (QSCRLFKRCR…VATGGSSLYT (127 aa)) the chain is on the intravirion side.

The protein belongs to the gammacoronaviruses M protein family. Homomultimer. Interacts with envelope E protein in the budding compartment of the host cell, which is located between endoplasmic reticulum and the Golgi complex. Forms a complex with HE and S proteins. Interacts with nucleocapsid N protein. This interaction probably participates in RNA packaging into the virus.

Its subcellular location is the virion membrane. It is found in the host Golgi apparatus membrane. Its function is as follows. Component of the viral envelope that plays a central role in virus morphogenesis and assembly via its interactions with other viral proteins. This chain is Membrane protein, found in Gallus gallus (Chicken).